Here is a 196-residue protein sequence, read N- to C-terminus: Vacuolar iron transporter homolog 2 (196 aa).

Topologically, residues 1–31 (MDQSGSNTNMDIEKESTTFDYSKRSQWLRAA) are cytoplasmic. The helical transmembrane segment at 32–52 (VLGANDGLVSTASLMMGVGAV) threads the bilayer. Over 53–59 (KHDVKAM) the chain is Vacuolar. A helical transmembrane segment spans residues 60-80 (ILSGFAGMVAGACSMAIGEFV). Residues 81 to 112 (SVYSQYDIEVAQMERDSVEIEKEKLPSPMQAA) lie on the Cytoplasmic side of the membrane. The helical transmembrane segment at 113 to 133 (AASALAFSAGAIVPLLAAAFV) threads the bilayer. At 134-139 (KEYKMR) the chain is on the vacuolar side. Residues 140-160 (IISVVVAVTVALMVFGWLGAA) traverse the membrane as a helical segment. At 161 to 172 (LGKAPAVRSSAR) the chain is on the cytoplasmic side. A helical membrane pass occupies residues 173 to 193 (VLFGGWLAMAVTFGLTKLIGL). The Vacuolar segment spans residues 194–196 (YGL).

It belongs to the CCC1 family. In terms of tissue distribution, expressed in roots, leaves and inflorescences.

The protein resides in the vacuole membrane. It carries out the reaction Fe(2+)(in) = Fe(2+)(out). Vacuolar iron transporter involved in the transfer of iron ions from the cytosol to the vacuole for intracellular iron storage. Involved in regulation of cellular iron homeostasis. Vacuolar iron storage is required for seed embryo and seedling development. In Arabidopsis thaliana (Mouse-ear cress), this protein is Vacuolar iron transporter homolog 2.